Consider the following 297-residue polypeptide: Tyrosine recombinase XerD (297 aa).

In terms of domain architecture, Core-binding (CB) spans 1–87 (MLEYAIEDFF…SIRSFHQFLI (87 aa)). Residues 108 to 291 (KLPDILSQDE…TKARLKDMYQ (184 aa)) enclose the Tyr recombinase domain. Residues arginine 147, lysine 171, histidine 243, arginine 246, and histidine 269 contribute to the active site. The O-(3'-phospho-DNA)-tyrosine intermediate role is filled by tyrosine 278.

This sequence belongs to the 'phage' integrase family. XerD subfamily. As to quaternary structure, forms a cyclic heterotetrameric complex composed of two molecules of XerC and two molecules of XerD.

It is found in the cytoplasm. Functionally, site-specific tyrosine recombinase, which acts by catalyzing the cutting and rejoining of the recombining DNA molecules. The XerC-XerD complex is essential to convert dimers of the bacterial chromosome into monomers to permit their segregation at cell division. It also contributes to the segregational stability of plasmids. This Oceanobacillus iheyensis (strain DSM 14371 / CIP 107618 / JCM 11309 / KCTC 3954 / HTE831) protein is Tyrosine recombinase XerD.